Here is a 607-residue protein sequence, read N- to C-terminus: Siderophore iron transporter mirC (607 aa).

A run of 12 helical transmembrane segments spans residues 67–89 (LVIA…QTIM), 129–148 (VFGR…LGYI), 186–208 (SLLN…VWIG), 223–245 (WGYG…SLLL), 279–301 (IFGL…LAAN), 311–328 (IVAM…LPFW), 349–368 (TALA…YFSV), 388–410 (GRVT…ILIK), 417–436 (VYVT…MLLY), 446–468 (VLGT…QLGV), 481–503 (TAMF…GAVW), and 557–574 (LLVL…LSLL). Residues 584 to 593 (SESSDHDDAS) are compositionally biased toward basic and acidic residues. Residues 584–607 (SESSDHDDASPRNGLGPGERAKRT) form a disordered region.

Belongs to the major facilitator superfamily.

It localises to the membrane. The polypeptide is Siderophore iron transporter mirC (mirC) (Emericella nidulans (strain FGSC A4 / ATCC 38163 / CBS 112.46 / NRRL 194 / M139) (Aspergillus nidulans)).